The chain runs to 527 residues: Protein TIC 56, chloroplastic (527 aa).

The transit peptide at 1-48 (MSSMNFNPFQNWFEKPPNPVPSINFVSLADSFFPKSQSPNFASIGLPK) directs the protein to the chloroplast. A disordered region spans residues 43–67 (SIGLPKFSKKSPKPETAGTDEPGPY). Deamidated asparagine is present on asparagine 350. Residues 491–508 (RREEELREEDLKHYSGRT) show a composition bias toward basic and acidic residues. A disordered region spans residues 491–527 (RREEELREEDLKHYSGRTDEDEEEEEEEDDDSNSKKD). Acidic residues predominate over residues 509 to 521 (DEDEEEEEEEDDD).

In terms of assembly, part of the Tic complex. Component of the 1-MD complex, composed of TIC20-I, TIC214, TIC100 and TIC56. Interacts with the translocating preproteins. Hydrolysis of ATP is essential for the formation of this complex. The 1-MD complex interacts with TIC21.

It localises to the plastid. It is found in the chloroplast inner membrane. In terms of biological role, involved in protein precursor import into chloroplasts. May be part of an intermediate translocation complex acting as a protein-conducting channel at the inner envelope. This chain is Protein TIC 56, chloroplastic, found in Arabidopsis thaliana (Mouse-ear cress).